The chain runs to 165 residues: Ribosome maturation factor RimM (165 aa).

Residues 94–163 enclose the PRC barrel domain; that stretch reads EDEFYIADLN…KDYVTLNYQR (70 aa).

Belongs to the RimM family. Binds ribosomal protein uS19.

It localises to the cytoplasm. Functionally, an accessory protein needed during the final step in the assembly of 30S ribosomal subunit, possibly for assembly of the head region. Essential for efficient processing of 16S rRNA. May be needed both before and after RbfA during the maturation of 16S rRNA. It has affinity for free ribosomal 30S subunits but not for 70S ribosomes. The chain is Ribosome maturation factor RimM from Rickettsia akari (strain Hartford).